A 946-amino-acid chain; its full sequence is Bifunctional glutamine synthetase adenylyltransferase/adenylyl-removing enzyme (946 aa).

Residues 1 to 440 (MKPLSSPLQQ…VFNELIGDDE (440 aa)) form an adenylyl removase region. Positions 449–946 (SEQWRELWQD…ASWQKWLVEE (498 aa)) are adenylyl transferase.

Belongs to the GlnE family. Mg(2+) serves as cofactor.

It carries out the reaction [glutamine synthetase]-O(4)-(5'-adenylyl)-L-tyrosine + phosphate = [glutamine synthetase]-L-tyrosine + ADP. It catalyses the reaction [glutamine synthetase]-L-tyrosine + ATP = [glutamine synthetase]-O(4)-(5'-adenylyl)-L-tyrosine + diphosphate. Functionally, involved in the regulation of glutamine synthetase GlnA, a key enzyme in the process to assimilate ammonia. When cellular nitrogen levels are high, the C-terminal adenylyl transferase (AT) inactivates GlnA by covalent transfer of an adenylyl group from ATP to specific tyrosine residue of GlnA, thus reducing its activity. Conversely, when nitrogen levels are low, the N-terminal adenylyl removase (AR) activates GlnA by removing the adenylyl group by phosphorolysis, increasing its activity. The regulatory region of GlnE binds the signal transduction protein PII (GlnB) which indicates the nitrogen status of the cell. The protein is Bifunctional glutamine synthetase adenylyltransferase/adenylyl-removing enzyme of Shigella boydii serotype 18 (strain CDC 3083-94 / BS512).